A 616-amino-acid polypeptide reads, in one-letter code: Chaperone protein HscA (616 aa).

It belongs to the heat shock protein 70 family.

Functionally, chaperone involved in the maturation of iron-sulfur cluster-containing proteins. Has a low intrinsic ATPase activity which is markedly stimulated by HscB. Involved in the maturation of IscU. This chain is Chaperone protein HscA, found in Proteus mirabilis (strain HI4320).